A 349-amino-acid chain; its full sequence is Small ribosomal subunit protein uS2 (349 aa).

The tract at residues Gln302 to Ser334 is disordered.

Belongs to the universal ribosomal protein uS2 family.

The sequence is that of Small ribosomal subunit protein uS2 from Ureaplasma parvum serovar 3 (strain ATCC 27815 / 27 / NCTC 11736).